A 211-amino-acid chain; its full sequence is MQARRIARELALMSIGQMPADRSRLQAKNLEELVLASVRTLREEANESLQRACTELRQGHNRLEASELTAPTVEAARREVAAAIALAEQAINRVGASLELPEFVRLADELQVRAYAFELLGAFVREGDNLDKLLDTCMEGWQVERLTRIDRDILRLALVEMVELKSVPFRVAIDEAVELAKKYSTDTAVRFINGVLRRVVQHLQLEQRPRR.

Belongs to the NusB family.

Functionally, involved in transcription antitermination. Required for transcription of ribosomal RNA (rRNA) genes. Binds specifically to the boxA antiterminator sequence of the ribosomal RNA (rrn) operons. The polypeptide is Transcription antitermination protein NusB (Gloeobacter violaceus (strain ATCC 29082 / PCC 7421)).